Here is a 474-residue protein sequence, read N- to C-terminus: tRNA modification GTPase MnmE (474 aa).

Residues arginine 23, glutamate 86, and lysine 125 each contribute to the (6S)-5-formyl-5,6,7,8-tetrahydrofolate site. The TrmE-type G domain occupies 221–396 (GIPVAIVGEP…LKEKLLEYVN (176 aa)). K(+) is bound at residue asparagine 231. GTP is bound by residues 231-236 (NVGKST), 250-256 (SEIAGTT), and 275-278 (DTAG). Serine 235 lines the Mg(2+) pocket. 3 residues coordinate K(+): serine 250, isoleucine 252, and threonine 255. Position 256 (threonine 256) interacts with Mg(2+). Lysine 474 contacts (6S)-5-formyl-5,6,7,8-tetrahydrofolate.

This sequence belongs to the TRAFAC class TrmE-Era-EngA-EngB-Septin-like GTPase superfamily. TrmE GTPase family. In terms of assembly, homodimer. Heterotetramer of two MnmE and two MnmG subunits. It depends on K(+) as a cofactor.

The protein resides in the cytoplasm. Functionally, exhibits a very high intrinsic GTPase hydrolysis rate. Involved in the addition of a carboxymethylaminomethyl (cmnm) group at the wobble position (U34) of certain tRNAs, forming tRNA-cmnm(5)s(2)U34. The protein is tRNA modification GTPase MnmE of Christiangramia forsetii (strain DSM 17595 / CGMCC 1.15422 / KT0803) (Gramella forsetii).